Reading from the N-terminus, the 687-residue chain is SLCO1B3-SLCO1B7 readthrough transcript protein (687 aa).

At 1–29 (MDQHQHLNKTAESASSEKKKTRRCNGFKM) the chain is on the cytoplasmic side. A helical membrane pass occupies residues 30 to 50 (FLAALSFSYIAKALGGIIMKI). At 51–63 (SITQIERRFDISS) the chain is on the extracellular side. A helical transmembrane segment spans residues 64–84 (SLAGLIDGSFEIGNLLVIVFV). The Cytoplasmic segment spans residues 85 to 96 (SYFGSKLHRPKL). The helical transmembrane segment at 97-117 (IGIGCLLMGTGSILTSLPHFF) threads the bilayer. At 118-170 (MGYYRYSKETNIDPSENSTSNLPNCLINQMLSLNRTPSEIIERGCVKESGSHM) the chain is on the extracellular side. 2 N-linked (GlcNAc...) asparagine glycosylation sites follow: asparagine 134 and asparagine 151. Residues 171–191 (WIYVFMGNMLRGIGETPIVPL) traverse the membrane as a helical segment. The Cytoplasmic segment spans residues 192–206 (GISYIDDFAKEGHSS). The helical transmembrane segment at 207–227 (LYLGTVNVMGMTGLVFAFMLG) threads the bilayer. Residues 228–258 (SLFAKMYVDIGYVDLSTIRITPKDSRWVGAW) lie on the Extracellular side of the membrane. A helical transmembrane segment spans residues 259–279 (WLGFLVSGIVSIISSIPFFFL). Topologically, residues 280–339 (PLNPNKPQKERKVSLFLHVLKTNDKRNQIANLTNRRKYITKNVTGFFQSLKSILTNPLYV) are cytoplasmic. The chain crosses the membrane as a helical span at residues 340 to 360 (IFVIFTLLHMSSYIASLTYII). Over 361 to 376 (KMVEQQYGWSASKTNF) the chain is Extracellular. The helical transmembrane segment at 377–397 (LLGVLALPAVAIGMFSGGYII) threads the bilayer. Residues 398 to 409 (KKFKLSLVGLAK) lie on the Cytoplasmic side of the membrane. Residues 410-430 (LAFCSATVHLLSQVLYFFLIC) traverse the membrane as a helical segment. Residues 431 to 539 (ESKSVAGLTL…CTRKSYVYFV (109 aa)) are Extracellular-facing. Residues 453–508 (DVPLSYCNSECNCDESQWEPVCGNNGITYLSPCLAGCKSSSGNKEPIVFYNCSCVE) enclose the Kazal-like domain. 3 disulfides stabilise this stretch: cysteine 459–cysteine 489, cysteine 465–cysteine 485, and cysteine 474–cysteine 506. N-linked (GlcNAc...) asparagine glycans are attached at residues asparagine 503 and asparagine 516. A helical membrane pass occupies residues 540–560 (IQVLDAFLCAVGLTSYSVLVI). Residues 561 to 568 (RIVQPELK) lie on the Cytoplasmic side of the membrane. Residues 569–589 (ALAIGFHSMIMRSLGGILVPI) form a helical membrane-spanning segment. Over 590–624 (YFGALIDTTCMKWSTNSCGARGACRIYNSTYLGRA) the chain is Extracellular. The N-linked (GlcNAc...) asparagine glycan is linked to asparagine 617. Residues 625 to 645 (FFGLKVALIFPVLVLLTVFIF) form a helical membrane-spanning segment. At 646–687 (VVRKKSHGKDTKVLENERQVMDEANLEFLNDSEHFVPSAEEQ) the chain is on the cytoplasmic side.

It belongs to the organo anion transporter (TC 2.A.60) family. In terms of tissue distribution, expressed in the perivenular areas (centrilobular) of the liver (at protein level).

It is found in the smooth endoplasmic reticulum membrane. The protein localises to the cell membrane. The protein resides in the endoplasmic reticulum membrane. It catalyses the reaction 17beta-estradiol 17-O-(beta-D-glucuronate)(out) = 17beta-estradiol 17-O-(beta-D-glucuronate)(in). It carries out the reaction dehydroepiandrosterone 3-sulfate(out) = dehydroepiandrosterone 3-sulfate(in). The enzyme catalyses taurocholate(out) = taurocholate(in). The catalysed reaction is lithocholate(out) = lithocholate(in). Transport activity is induced by farnesoid X receptor (FXR) agonists such as chenodeoxycholate. Mediates the Na(+)-independent uptake of organic anions. Transports the conjugated steroids 17-beta-glucuronosyl estradiol (17beta-estradiol 17-O-(beta-D-glucuronate) or E2G) and dehydroepiandrosterone 3-sulfate (DHEAS) at the smooth endoplasmic reticulum membrane (SER), granting access to metabolizing enzymes. Contributes to the metabolism of bile acids such as taurocholate (cholyltaurine) and lithocholate, by functioning as a doorway between SER and cytosol, thereby decreasing their circulating levels and protecting the organism from their detergent properties. Regulates access or exit of drugs to the SER lumen. In Homo sapiens (Human), this protein is SLCO1B3-SLCO1B7 readthrough transcript protein.